Reading from the N-terminus, the 459-residue chain is UDP-N-acetylglucosamine 1-carboxyvinyltransferase (459 aa).

Residue 40 to 41 (KN) coordinates phosphoenolpyruvate. Residue Arg-111 coordinates UDP-N-acetyl-alpha-D-glucosamine. The active-site Proton donor is Cys-135. 2-(S-cysteinyl)pyruvic acid O-phosphothioketal is present on Cys-135. Residues 140–144 (RPVDL), Asp-324, and Val-346 each bind UDP-N-acetyl-alpha-D-glucosamine. The segment at 437-459 (PSAPPSEVSSAVAAGPDAAAAPV) is disordered. The segment covering 441–459 (PSEVSSAVAAGPDAAAAPV) has biased composition (low complexity).

This sequence belongs to the EPSP synthase family. MurA subfamily.

It localises to the cytoplasm. It catalyses the reaction phosphoenolpyruvate + UDP-N-acetyl-alpha-D-glucosamine = UDP-N-acetyl-3-O-(1-carboxyvinyl)-alpha-D-glucosamine + phosphate. The protein operates within cell wall biogenesis; peptidoglycan biosynthesis. Cell wall formation. Adds enolpyruvyl to UDP-N-acetylglucosamine. The chain is UDP-N-acetylglucosamine 1-carboxyvinyltransferase from Gloeobacter violaceus (strain ATCC 29082 / PCC 7421).